Here is a 295-residue protein sequence, read N- to C-terminus: MTGGMKPPARKPRILNSDGSSNITRLGLEKRGWLDDHYHDLLTVSWPVFITLITGLYLVTNALFALAYLACGDVIENARPGSFTDAFFFSVQTMATIGYGKLIPIGPLANTLVTLEALCGMLGLAVAASLIYARFTRPTAGVLFSSRMVISDFEGKPTLMMRLANLRIEQIIEADVHLVLVRSEISQEGMVFRRFHDLTLTRSRSPIFSLSWTVMHPIDHHSPIYGETDETLRNSHSEFLVLFTGHHEAFAQNVHARHAYSCDEIIWGGHFVDVFTTLPDGRRALDLGKFHEIAQ.

Residues M1–P47 lie on the Cytoplasmic side of the membrane. Residues V48–L69 form a helical membrane-spanning segment. Over A70–S82 the chain is Extracellular. The helical; Pore-forming intramembrane region spans F83–A95. The Selectivity filter motif lies at T96–G100. The helical transmembrane segment at P107–I131 threads the bilayer. Residues Y132–Q295 lie on the Cytoplasmic side of the membrane.

Belongs to the inward rectifier-type potassium channel (TC 1.A.2.1) family. KCNJ11 subfamily. As to quaternary structure, homotetramer.

It localises to the membrane. Its function is as follows. Inward rectifier potassium channel that mediates potassium uptake into the cell. Inward rectifier potassium channels are characterized by a greater tendency to allow potassium to flow into the cell rather than out of it. The inward rectification may be achieved by the blockage of outward current by cytoplasmic divalent metal ions and polyamines. Complements an E.coli mutant that is defective in K(+) uptake. The chain is Inward rectifier potassium channel Kirbac3.1 from Paramagnetospirillum magnetotacticum (Aquaspirillum magnetotacticum).